Here is a 112-residue protein sequence, read N- to C-terminus: Protein ECM19 (112 aa).

The chain crosses the membrane as a helical span at residues N35 to F57. Residues E82–Q112 form a disordered region. The segment covering A98–Q112 has biased composition (pro residues).

It localises to the mitochondrion membrane. Functionally, may be involved in cell wall organization and biogenesis. This chain is Protein ECM19 (ECM19), found in Saccharomyces cerevisiae (strain ATCC 204508 / S288c) (Baker's yeast).